The sequence spans 207 residues: Riboflavin synthase (207 aa).

2 Lumazine-binding repeats span residues M1 to H94 and I95 to L191. 2,4-dihydroxypteridine-binding positions include G4–V6, C45–T47, D59–T64, G98–V100, K133, S142–T144, and N156–T161.

As to quaternary structure, homotrimer.

It catalyses the reaction 2 6,7-dimethyl-8-(1-D-ribityl)lumazine + H(+) = 5-amino-6-(D-ribitylamino)uracil + riboflavin. It functions in the pathway cofactor biosynthesis; riboflavin biosynthesis; riboflavin from 2-hydroxy-3-oxobutyl phosphate and 5-amino-6-(D-ribitylamino)uracil: step 2/2. In terms of biological role, catalyzes the dismutation of two molecules of 6,7-dimethyl-8-ribityllumazine, resulting in the formation of riboflavin and 5-amino-6-(D-ribitylamino)uracil. This Aquifex aeolicus (strain VF5) protein is Riboflavin synthase (ribE).